A 406-amino-acid chain; its full sequence is uncharacterized protein (406 aa).

5 helical membrane passes run 7 to 27, 31 to 51, 65 to 85, 92 to 112, and 191 to 211; these read LCTN…YYLF, YFNI…YGSV, LIFI…SEII, IFYF…SFIL, and ISLI…SSFF. Positions 259–331 are disordered; sequence TLNVPISTNN…TGTNNNVVDN (73 aa). Polar residues predominate over residues 262-291; sequence VPISTNNTDNLNSVKTNQQFNTPVAKSNTK. Residues 292-303 are compositionally biased toward basic residues; the sequence is SNRRKKTGKKIR. Low complexity predominate over residues 306–318; that stretch reads NQTTSSNSSNNQS. Positions 319 to 330 are enriched in polar residues; sequence PESTGTNNNVVD.

Its subcellular location is the membrane. This is an uncharacterized protein from Acanthamoeba polyphaga (Amoeba).